A 617-amino-acid chain; its full sequence is MHRIGNAVRMASSSSANATITARHTQYSHAKTGGFSQTGPTLHNPYKDDPILDRTLRRLLPESEYMRVAADLSKFGDRITSEVEHLGRQAELEQPRLEHQDAWGKRVDKLIVCNEWHKLKQICAEEGVISIGYEDSVDPFVRRIHQVAKLFLFSPSAGLVSCPMAMTDGAVKTLTSLNLYGKHKLATEAVDRLRSRDPSKAWTSGQWMTEKKGGSDVAGGCDTYAVQIDKDTYRLHGYKWFSSAVDADVALTLARIVDSDGNALEGSRGLSLFLLKIRDESGNLNGIQMVRLKNKLGTKQLPTAELLLDGAIAERIGDQGRGVAGISNMLNITRIHNAVASLGYMRRIISLARDYSTKRVVFGQTQSKWPLHTTTLAKMEVDTRGSMLLLFEAARLLGLSEAGKSSDVEAMMLRLITPVLKLYAGKQAVPMVSEGIECFGGQGYMEDTGLPTLLRDAQVTPIWEGTTNVLSLDVLRVFSGKENILLAFGKRVEQLLGNTKTEDEKLKKSKEAVESALKQLQKLLVKASDSAIQGETRIDSVARHIAFTIARIYSGALLIDHASDSSVANQSDIEVAYRYCCEQPLIDLRWEWFASERVKADREIVFDNFTALEKSKI.

The interval 1 to 47 is disordered; sequence MHRIGNAVRMASSSSANATITARHTQYSHAKTGGFSQTGPTLHNPYK. Over residues 11 to 22 the composition is skewed to low complexity; it reads ASSSSANATITA. Positions 23–41 are enriched in polar residues; that stretch reads RHTQYSHAKTGGFSQTGPT. Residues 206–215 and 241–243 contribute to the FAD site; these read QWMTEKKGGS and FSS. S215 lines the substrate pocket. Substrate contacts are provided by S267 and R334. FAD contacts are provided by residues R359, 366-369, E437, G441, and 464-466; these read QSKW and EGT.

The protein belongs to the acyl-CoA dehydrogenase family. Homotetramer; dimer of dimers.

Functionally, promotes adaption to elevated temperatures by regulating expression of the lipid desaturase, fat-7. Binds selectively and with high affinity to fatty acids with chain lengths from C10 to C12 and prevents them from activating fat-7 expression mediated by the nuclear hormone receptor nhr-49, leading to low levels of membrane lipid desaturation and membrane fluidity for adaption to heat. This is Acyl-CoA dehydrogenase family member 11 from Caenorhabditis elegans.